A 1376-amino-acid chain; its full sequence is Ubiquitin carboxyl-terminal hydrolase 47 (1376 aa).

An N6-acetyllysine modification is found at lysine 122. One can recognise a USP domain in the interval 188-564; sequence VGLVNQAMTC…NAYMLIYRLK (377 aa). Cysteine 197 functions as the Nucleophile in the catalytic mechanism. A disordered region spans residues 426-452; sequence EKSPQTESCTDSGAENEGSCHSDQMSN. The segment covering 430–452 has biased composition (polar residues); that stretch reads QTESCTDSGAENEGSCHSDQMSN. Histidine 503 (proton acceptor) is an active-site residue. Position 832 is a phosphoserine (serine 832). Disordered regions lie at residues 835-863, 880-971, and 985-1025; these read SYSK…KGPA, LKSL…SSDT, and GLDS…ESGK. A compositionally biased stretch (low complexity) spans 882 to 900; it reads SLSLQQQQQDGDNGDSSKS. Serine 911 and serine 934 each carry phosphoserine. The segment covering 930 to 939 has biased composition (polar residues); sequence HIQTSDPENF. The segment covering 941–951 has biased composition (basic and acidic residues); it reads SEERSDSDVNN. Over residues 954-970 the composition is skewed to low complexity; the sequence is STSSVDSDILSSSHSSD. Positions 998–1007 are enriched in basic and acidic residues; sequence KANEGKKETW. Residues 1008–1021 show a composition bias toward acidic residues; it reads DTAEEDSGTDSEYD. Serine 1014 carries the post-translational modification Phosphoserine. Threonine 1016 carries the phosphothreonine modification. Serine 1018 bears the Phosphoserine mark.

The protein belongs to the peptidase C19 family. USP47 subfamily. As to quaternary structure, interacts with BTRC and FBXW11. Interacts with POLB.

Its subcellular location is the cytoplasm. It carries out the reaction Thiol-dependent hydrolysis of ester, thioester, amide, peptide and isopeptide bonds formed by the C-terminal Gly of ubiquitin (a 76-residue protein attached to proteins as an intracellular targeting signal).. Functionally, ubiquitin-specific protease that specifically deubiquitinates monoubiquitinated DNA polymerase beta (POLB), stabilizing POLB thereby playing a role in base-excision repair (BER). Acts as a regulator of cell growth and genome integrity. May also indirectly regulate CDC25A expression at a transcriptional level. This chain is Ubiquitin carboxyl-terminal hydrolase 47 (Usp47), found in Mus musculus (Mouse).